The chain runs to 492 residues: Serine/threonine protein phosphatase 2A 57 kDa regulatory subunit B' theta isoform (492 aa).

The disordered stretch occupies residues 1-63 (MWKQILSKLP…GFKEGNLKGN (63 aa)). Over residues 16–39 (KNHSSSSSSTSKSSDNGASKSGNS) the composition is skewed to low complexity. The short motif at 490–492 (SSL) is the Microbody targeting signal element.

It belongs to the phosphatase 2A regulatory subunit B56 family. As to quaternary structure, PP2A consists of a common heteromeric enzyme, composed of a catalytic subunit (subunits C), a constant regulatory subunit (subunit A), and a variety of regulatory subunits such as subunits B (the R2/B/PR55/B55, R3/B''/PR72/PR130/PR59 and R5/B'/B56 families). Interacts with BZR1. Interacts with PP2A2, PP2A5 and PP2AA2. As to expression, highly expressed in dry seeds. Expressed in roots, cotyledons, rosette leaves and flowers.

It localises to the cytoplasm. Its subcellular location is the cytosol. The protein localises to the peroxisome. The B regulatory subunit may modulate substrate selectivity and catalytic activity, and may also direct the localization of the catalytic enzyme to a particular subcellular compartment. Associates with the serine/threonine-protein phosphatase PP2A catalytic subunit C and regulatory subunit A to positively regulates beta-oxidation of fatty acids and protoauxins in peroxisomes by dephosphorylating peroxisomal beta-oxidation-related proteins. Required for the formation of the PP2A holoenzyme that negatively regulates brassinosteroid signaling by dephosphorylating and inactivating BRI1 in the cytoplasm. This chain is Serine/threonine protein phosphatase 2A 57 kDa regulatory subunit B' theta isoform (B'THETA), found in Arabidopsis thaliana (Mouse-ear cress).